The chain runs to 347 residues: Protein N-terminal asparagine amidohydrolase (347 aa).

It carries out the reaction N-terminal L-asparaginyl-[protein] + H2O + H(+) = N-terminal L-aspartyl-[protein] + NH4(+). Functionally, N-terminal asparagine deamidase that mediates deamidation of N-terminal asparagine residues to aspartate. Required for the ubiquitin-dependent turnover of intracellular proteins that initiate with Met-Asn. These proteins are acetylated on the retained initiator methionine and can subsequently be modified by the removal of N-acetyl methionine by acylaminoacid hydrolase (AAH). Conversion of the resulting N-terminal asparagine to aspartate by NTAN1 renders the protein susceptible to arginylation, polyubiquitination and degradation as specified by the N-end rule. This enzyme does not act on substrates with internal or C-terminal asparagines and does not act on glutamine residues in any position. Does not seem to be involved in immune response, unlike the N-terminal glutamine amidohydrolase NTAQ1. In Arabidopsis thaliana (Mouse-ear cress), this protein is Protein N-terminal asparagine amidohydrolase.